A 285-amino-acid polypeptide reads, in one-letter code: Bifunctional protein FolD (285 aa).

NADP(+) contacts are provided by residues Gly-165–Ser-167 and Ser-190.

It belongs to the tetrahydrofolate dehydrogenase/cyclohydrolase family. In terms of assembly, homodimer.

The catalysed reaction is (6R)-5,10-methylene-5,6,7,8-tetrahydrofolate + NADP(+) = (6R)-5,10-methenyltetrahydrofolate + NADPH. It carries out the reaction (6R)-5,10-methenyltetrahydrofolate + H2O = (6R)-10-formyltetrahydrofolate + H(+). It participates in one-carbon metabolism; tetrahydrofolate interconversion. In terms of biological role, catalyzes the oxidation of 5,10-methylenetetrahydrofolate to 5,10-methenyltetrahydrofolate and then the hydrolysis of 5,10-methenyltetrahydrofolate to 10-formyltetrahydrofolate. This chain is Bifunctional protein FolD, found in Streptococcus pneumoniae (strain ATCC BAA-255 / R6).